Consider the following 289-residue polypeptide: Shikimate dehydrogenase (NADP(+)) (289 aa).

Residues 19-21 and Thr-66 contribute to the shikimate site; that span reads SLS. Lys-70 functions as the Proton acceptor in the catalytic mechanism. Residues Asn-91 and Asp-106 each coordinate shikimate. NADP(+)-binding positions include 131–135 and Leu-229; that span reads GNGGA. Residue Tyr-231 coordinates shikimate. Gly-252 contacts NADP(+).

This sequence belongs to the shikimate dehydrogenase family. Homodimer.

The enzyme catalyses shikimate + NADP(+) = 3-dehydroshikimate + NADPH + H(+). It functions in the pathway metabolic intermediate biosynthesis; chorismate biosynthesis; chorismate from D-erythrose 4-phosphate and phosphoenolpyruvate: step 4/7. Involved in the biosynthesis of the chorismate, which leads to the biosynthesis of aromatic amino acids. Catalyzes the reversible NADPH linked reduction of 3-dehydroshikimate (DHSA) to yield shikimate (SA). This chain is Shikimate dehydrogenase (NADP(+)), found in Nostoc sp. (strain PCC 7120 / SAG 25.82 / UTEX 2576).